The following is a 405-amino-acid chain: Interferon alpha/beta receptor 1a (405 aa).

Positions 1–20 (MKVGFALVLLWSLPITNVLA) are cleaved as a signal peptide. Topologically, residues 21 to 233 (ELPQPQNLTL…QTEGDTPYGQ (213 aa)) are extracellular. 2 consecutive Fibronectin type-III domains span residues 22 to 123 (LPQP…IDAS) and 126 to 228 (PPSR…TEGD). 2 N-linked (GlcNAc...) asparagine glycosylation sites follow: Asn27 and Asn70. 2 disulfide bridges follow: Cys75-Cys83 and Cys201-Cys222. Asn212 carries N-linked (GlcNAc...) asparagine glycosylation. A helical transmembrane segment spans residues 234–254 (IFLYFLVSMMVCFLLVLLSSY). Residues 255-405 (AFFRFYRGLK…LDEGVVDICV (151 aa)) lie on the Cytoplasmic side of the membrane. Residues 325 to 374 (TAPPSELEQDSGRRIRQDSGDSGIYSTEGGSAQQGRSGGEPIRRDQEVDS) form a disordered region. Positions 334–343 (DSGRRIRQDS) are enriched in basic and acidic residues. Positions 348 to 359 (IYSTEGGSAQQG) are enriched in polar residues.

It belongs to the type II cytokine receptor family. As to quaternary structure, heterodimer with IFNAR2; forming the receptor for type I interferon.

The protein localises to the cell membrane. Functionally, together with IFNAR2, forms the heterodimeric receptor for type I interferons (including interferons alpha, beta, epsilon, omega and kappa). Type I interferon binding activates the JAK-STAT signaling cascade, resulting in transcriptional activation or repression of interferon-regulated genes that encode the effectors of the interferon response. Mechanistically, type I interferon-binding brings the IFNAR1 and IFNAR2 subunits into close proximity with one another, driving their associated Janus kinases (JAKs) (TYK2 bound to IFNAR1 and JAK1 bound to IFNAR2) to cross-phosphorylate one another. The activated kinases phosphorylate specific tyrosine residues on the intracellular domains of IFNAR1 and IFNAR2, forming docking sites for the STAT transcription factors. STAT proteins are then phosphorylated by the JAKs, promoting their translocation into the nucleus to regulate expression of interferon-regulated genes. The protein is Interferon alpha/beta receptor 1a of Oncorhynchus mykiss (Rainbow trout).